The chain runs to 124 residues: Small ribosomal subunit protein uS12 (124 aa).

Position 89 is a 3-methylthioaspartic acid (Asp89). A disordered region spans residues 105–124 (SGVSDRRQGRSKYGAKRPKS). Positions 113-124 (GRSKYGAKRPKS) are enriched in basic residues.

Belongs to the universal ribosomal protein uS12 family. As to quaternary structure, part of the 30S ribosomal subunit. Contacts proteins S8 and S17. May interact with IF1 in the 30S initiation complex.

In terms of biological role, with S4 and S5 plays an important role in translational accuracy. Interacts with and stabilizes bases of the 16S rRNA that are involved in tRNA selection in the A site and with the mRNA backbone. Located at the interface of the 30S and 50S subunits, it traverses the body of the 30S subunit contacting proteins on the other side and probably holding the rRNA structure together. The combined cluster of proteins S8, S12 and S17 appears to hold together the shoulder and platform of the 30S subunit. This is Small ribosomal subunit protein uS12 from Colwellia psychrerythraea (strain 34H / ATCC BAA-681) (Vibrio psychroerythus).